The primary structure comprises 508 residues: MSQEKYIMAIDQGTTSSRAIIFNQKGEKVSSSQKEFPQIFPHAGWVEHNANQIWNSVQSVIAGAFIESSIKPSQIEAIGITNQRETTVVWDKKTGVPIYNAIVWQSRQTAPIAEQLKQDGHTKMIHEKTGLVIDAYFSATKIRWILDHVPGAQERAEKGELLFGTIDTWLVWKLTDGAVHVTDYSNAARTMLYNIKDLTWDDEILELLNIPKDMLPEVKSNSEIYGKTAAFHFYGGEVPISGMAGDQQAALFGQLAFEPGMVKNTYGTGSFIIMNTGDEMQLSSNNLLTTIGYGINGKVHYALEGSIFIAGSAIQWLRDGLKMIETSPESEQLALASTSDDEVYVVPAFTGLGTPYWDSNARGSVFGLTRGTSKEDFVKATLQSIAYQVRDVIDTMQVDSGIDIQQLRVDGGAAMNNMLMQFQADILGIDIARAKNLETTALGAAFLAGLAVGYWEDMDALKELNATGQLFKASMNESRKEKLYKGWKRAVKATQVFTQEEDADDDAK.

Thr14 is an ADP binding site. ATP-binding residues include Thr14, Thr15, and Ser16. Thr14 is a binding site for sn-glycerol 3-phosphate. Position 18 (Arg18) interacts with ADP. Sn-glycerol 3-phosphate-binding residues include Arg84, Glu85, and Tyr136. Glycerol-binding residues include Arg84, Glu85, and Tyr136. At His232 the chain carries Phosphohistidine; by HPr. Asp246 serves as a coordination point for sn-glycerol 3-phosphate. Residues Asp246 and Gln247 each coordinate glycerol. Positions 268 and 311 each coordinate ADP. Thr268, Gly311, Gln315, and Gly412 together coordinate ATP. Residues Gly412 and Asn416 each contribute to the ADP site.

This sequence belongs to the FGGY kinase family. Homotetramer and homodimer (in equilibrium). The phosphoenolpyruvate-dependent sugar phosphotransferase system (PTS), including enzyme I, and histidine-containing protein (HPr) are required for the phosphorylation, which leads to the activation of the enzyme.

It catalyses the reaction glycerol + ATP = sn-glycerol 3-phosphate + ADP + H(+). The protein operates within polyol metabolism; glycerol degradation via glycerol kinase pathway; sn-glycerol 3-phosphate from glycerol: step 1/1. With respect to regulation, activated by phosphorylation and inhibited by fructose 1,6-bisphosphate (FBP). Key enzyme in the regulation of glycerol uptake and metabolism. Catalyzes the phosphorylation of glycerol to yield sn-glycerol 3-phosphate. The protein is Glycerol kinase of Streptococcus pyogenes serotype M28 (strain MGAS6180).